Reading from the N-terminus, the 476-residue chain is Probable cytosolic Fe-S cluster assembly factor GJ13047 (476 aa).

[4Fe-4S] cluster is bound by residues Cys23, Cys68, Cys71, Cys74, Cys187, Cys243, Cys395, and Cys399.

The protein belongs to the NARF family.

In terms of biological role, component of the cytosolic iron-sulfur (Fe/S) protein assembly machinery. Required for maturation of extramitochondrial Fe/S proteins. The sequence is that of Probable cytosolic Fe-S cluster assembly factor GJ13047 from Drosophila virilis (Fruit fly).